We begin with the raw amino-acid sequence, 113 residues long: Ig heavy chain V-III region A4 (113 aa).

The 113-residue stretch at 1–113 folds into the Ig-like domain; that stretch reads EVKLEESGGG…YWGQGTLVTV (113 aa). Cysteines 22 and 98 form a disulfide.

This Mus musculus (Mouse) protein is Ig heavy chain V-III region A4.